Consider the following 92-residue polypeptide: Large ribosomal subunit protein bL25 (92 aa).

The protein belongs to the bacterial ribosomal protein bL25 family. In terms of assembly, part of the 50S ribosomal subunit; part of the 5S rRNA/L5/L18/L25 subcomplex. Contacts the 5S rRNA. Binds to the 5S rRNA independently of L5 and L18.

Its function is as follows. This is one of the proteins that binds to the 5S RNA in the ribosome where it forms part of the central protuberance. The protein is Large ribosomal subunit protein bL25 of Vibrio atlanticus (strain LGP32) (Vibrio splendidus (strain Mel32)).